A 32-amino-acid chain; its full sequence is Photosystem I reaction center subunit XII (32 aa).

A helical membrane pass occupies residues 9 to 28 (VYIALVVALIPGLLAWRLAT).

Belongs to the PsaM family.

The protein resides in the cellular thylakoid membrane. The protein is Photosystem I reaction center subunit XII of Nostoc sp. (strain PCC 7120 / SAG 25.82 / UTEX 2576).